The chain runs to 381 residues: Tryptophan--tRNA ligase (381 aa).

Residues 82 to 90 (PSLGMHIGH) carry the 'HIGH' region motif. The 'KMSKS' region signature appears at 254 to 258 (KMSSS).

It belongs to the class-I aminoacyl-tRNA synthetase family.

It localises to the cytoplasm. The enzyme catalyses tRNA(Trp) + L-tryptophan + ATP = L-tryptophyl-tRNA(Trp) + AMP + diphosphate + H(+). This Sulfurisphaera tokodaii (strain DSM 16993 / JCM 10545 / NBRC 100140 / 7) (Sulfolobus tokodaii) protein is Tryptophan--tRNA ligase.